The chain runs to 270 residues: Putative pyruvate, phosphate dikinase regulatory protein 2 (270 aa).

151–158 (GVSRTSKT) lines the ADP pocket.

This sequence belongs to the pyruvate, phosphate/water dikinase regulatory protein family. PDRP subfamily.

It carries out the reaction N(tele)-phospho-L-histidyl/L-threonyl-[pyruvate, phosphate dikinase] + ADP = N(tele)-phospho-L-histidyl/O-phospho-L-threonyl-[pyruvate, phosphate dikinase] + AMP + H(+). It catalyses the reaction N(tele)-phospho-L-histidyl/O-phospho-L-threonyl-[pyruvate, phosphate dikinase] + phosphate + H(+) = N(tele)-phospho-L-histidyl/L-threonyl-[pyruvate, phosphate dikinase] + diphosphate. Functionally, bifunctional serine/threonine kinase and phosphorylase involved in the regulation of the pyruvate, phosphate dikinase (PPDK) by catalyzing its phosphorylation/dephosphorylation. The sequence is that of Putative pyruvate, phosphate dikinase regulatory protein 2 from Listeria monocytogenes serovar 1/2a (strain ATCC BAA-679 / EGD-e).